The sequence spans 535 residues: CTP synthase (535 aa).

An amidoligase domain region spans residues 1–267 (MTKYIFVTGG…DKLVCEHMKL (267 aa)). A CTP-binding site is contributed by Ser13. Ser13 lines the UTP pocket. 14–19 (SLGKGI) contributes to the ATP binding site. An L-glutamine-binding site is contributed by Tyr54. Asp71 provides a ligand contact to ATP. Residues Asp71 and Glu141 each contribute to the Mg(2+) site. CTP-binding positions include 148 to 150 (DIE), 188 to 193 (KTKPTQ), and Lys224. UTP is bound by residues 188 to 193 (KTKPTQ) and Lys224. The Glutamine amidotransferase type-1 domain occupies 292–534 (TIGLVGKYVE…IGASVEAANQ (243 aa)). Gly354 contacts L-glutamine. Cys381 (nucleophile; for glutamine hydrolysis) is an active-site residue. L-glutamine is bound by residues 382-385 (LGMQ), Glu405, and Arg462. Catalysis depends on residues His507 and Glu509.

This sequence belongs to the CTP synthase family. In terms of assembly, homotetramer. Interacts with BrxC.

The catalysed reaction is UTP + L-glutamine + ATP + H2O = CTP + L-glutamate + ADP + phosphate + 2 H(+). It carries out the reaction L-glutamine + H2O = L-glutamate + NH4(+). It catalyses the reaction UTP + NH4(+) + ATP = CTP + ADP + phosphate + 2 H(+). Its pathway is pyrimidine metabolism; CTP biosynthesis via de novo pathway; CTP from UDP: step 2/2. Allosterically activated by GTP, when glutamine is the substrate; GTP has no effect on the reaction when ammonia is the substrate. The allosteric effector GTP functions by stabilizing the protein conformation that binds the tetrahedral intermediate(s) formed during glutamine hydrolysis. Inhibited by the product CTP, via allosteric rather than competitive inhibition. Catalyzes the ATP-dependent amination of UTP to CTP with either L-glutamine or ammonia as the source of nitrogen. Regulates intracellular CTP levels through interactions with the four ribonucleotide triphosphates. In Bacillus subtilis (strain 168), this protein is CTP synthase.